The following is a 302-amino-acid chain: Alpha-ketoglutarate-dependent dioxygenase alkB homolog 4 (302 aa).

N-acetylalanine is present on Ala-2. Thr-8 is modified (phosphothreonine). Residues 150–274 (PVEQCNLDYC…RVCVTFRELS (125 aa)) enclose the Fe2OG dioxygenase domain. Positions 169, 171, and 254 each coordinate Fe cation. Arg-265 contacts 2-oxoglutarate.

The protein belongs to the alkB family. Interacts with ZFHX3, MLLT3, MLLT1, HSF4, EP300, TES, EIF3C, MTMR6 and PSMA6. Fe(2+) serves as cofactor. In terms of tissue distribution, widely expressed, with highest expression in pancreas, ovary and spleen.

It localises to the cytoplasm. The protein resides in the nucleus. It is found in the nucleolus. The protein localises to the midbody. The enzyme catalyses an N(6)-methyl-2'-deoxyadenosine in DNA + 2-oxoglutarate + O2 = a 2'-deoxyadenosine in DNA + formaldehyde + succinate + CO2. It carries out the reaction N(6)-methyl-L-lysyl-[protein] + 2-oxoglutarate + O2 = L-lysyl-[protein] + formaldehyde + succinate + CO2. Dioxygenase that mediates demethylation of actin monomethylated at 'Lys-84' (K84me1), thereby acting as a regulator of actomyosin-processes. Demethylation of actin K84me1 is required for maintaining actomyosin dynamics supporting normal cleavage furrow ingression during cytokinesis and cell migration. In addition to proteins, also demethylates DNA: specifically demethylates DNA methylated on the 6th position of adenine (N(6)-methyladenosine) DNA, thereby regulating Polycomb silencing. This Homo sapiens (Human) protein is Alpha-ketoglutarate-dependent dioxygenase alkB homolog 4.